Consider the following 286-residue polypeptide: tRNA (guanine-N(7)-)-methyltransferase (286 aa).

The disordered stretch occupies residues 1-22 (MGRARPKSQKRGDYRVSRSQEN). S-adenosyl-L-methionine is bound by residues Gly104, 127-128 (EI), 162-163 (NS), and Cys182. Asp185 is an active-site residue. 260-262 (TEE) contributes to the S-adenosyl-L-methionine binding site.

The protein belongs to the class I-like SAM-binding methyltransferase superfamily. TrmB family. Forms a complex with TRM82.

The protein localises to the nucleus. It carries out the reaction guanosine(46) in tRNA + S-adenosyl-L-methionine = N(7)-methylguanosine(46) in tRNA + S-adenosyl-L-homocysteine. The protein operates within tRNA modification; N(7)-methylguanine-tRNA biosynthesis. In terms of biological role, catalyzes the formation of N(7)-methylguanine at position 46 (m7G46) in tRNA. In Colletotrichum orbiculare (strain 104-T / ATCC 96160 / CBS 514.97 / LARS 414 / MAFF 240422) (Cucumber anthracnose fungus), this protein is tRNA (guanine-N(7)-)-methyltransferase.